The chain runs to 77 residues: MNKKTLLVIFIVTLLIADEVNSFKFGGFLKKMWKSKLAKKLRAKGKQMLKEYANKVLSPEEEAPAAVPAGAPERRRR.

Positions 1–22 are cleaved as a signal peptide; sequence MNKKTLLVIFIVTLLIADEVNS. Positions 74-77 are excised as a propeptide; that stretch reads RRRR.

It belongs to the non-disulfide-bridged peptide (NDBP) superfamily. Long chain multifunctional peptide (group 2) family. In terms of tissue distribution, expressed by the venom gland.

The protein localises to the secreted. Functionally, antimicrobial peptide. May also inhibit angiotensin-converting enzyme (ACE) and potentiate bradykinin (BK). The chain is Bradykinin-potentiating peptide from Tityus discrepans (Venezuelan scorpion).